We begin with the raw amino-acid sequence, 276 residues long: Thymidylate synthase (276 aa).

A dUMP-binding site is contributed by Arg26. (6R)-5,10-methylene-5,6,7,8-tetrahydrofolate is bound at residue His56. 131-132 (RR) is a binding site for dUMP. The active-site Nucleophile is the Cys151. DUMP is bound by residues 178 to 181 (RSAD), Asn189, and 219 to 221 (HIY). Asp181 is a (6R)-5,10-methylene-5,6,7,8-tetrahydrofolate binding site. Residue Ala275 coordinates (6R)-5,10-methylene-5,6,7,8-tetrahydrofolate.

Belongs to the thymidylate synthase family. Bacterial-type ThyA subfamily. In terms of assembly, homodimer.

The protein localises to the cytoplasm. It carries out the reaction dUMP + (6R)-5,10-methylene-5,6,7,8-tetrahydrofolate = 7,8-dihydrofolate + dTMP. It participates in pyrimidine metabolism; dTTP biosynthesis. Functionally, catalyzes the reductive methylation of 2'-deoxyuridine-5'-monophosphate (dUMP) to 2'-deoxythymidine-5'-monophosphate (dTMP) while utilizing 5,10-methylenetetrahydrofolate (mTHF) as the methyl donor and reductant in the reaction, yielding dihydrofolate (DHF) as a by-product. This enzymatic reaction provides an intracellular de novo source of dTMP, an essential precursor for DNA biosynthesis. This is Thymidylate synthase from Polaromonas naphthalenivorans (strain CJ2).